Reading from the N-terminus, the 210-residue chain is Large ribosomal subunit protein uL3 (210 aa).

Belongs to the universal ribosomal protein uL3 family. As to quaternary structure, part of the 50S ribosomal subunit. Forms a cluster with proteins L14 and L19.

Functionally, one of the primary rRNA binding proteins, it binds directly near the 3'-end of the 23S rRNA, where it nucleates assembly of the 50S subunit. In Syntrophotalea carbinolica (strain DSM 2380 / NBRC 103641 / GraBd1) (Pelobacter carbinolicus), this protein is Large ribosomal subunit protein uL3.